A 297-amino-acid chain; its full sequence is tRNA dimethylallyltransferase (297 aa).

15–22 (GPTASGKS) provides a ligand contact to ATP. 17–22 (TASGKS) contributes to the substrate binding site. Interaction with substrate tRNA stretches follow at residues 40–43 (DSMQ) and 164–168 (QRIVR).

This sequence belongs to the IPP transferase family. In terms of assembly, monomer. The cofactor is Mg(2+).

It carries out the reaction adenosine(37) in tRNA + dimethylallyl diphosphate = N(6)-dimethylallyladenosine(37) in tRNA + diphosphate. Functionally, catalyzes the transfer of a dimethylallyl group onto the adenine at position 37 in tRNAs that read codons beginning with uridine, leading to the formation of N6-(dimethylallyl)adenosine (i(6)A). The protein is tRNA dimethylallyltransferase of Rhizobium etli (strain CIAT 652).